The chain runs to 239 residues: Apoptosis regulator Bcl-2 (239 aa).

The BH4 signature appears at 10–30 (DNREIVMKYIHYKLSQRGYEW). Positions 39–85 (PPGAAPAPGIFSSQPGHTPHPAASRDPVARTSPLQTPAAPGAAAGPA) are disordered. Residue T69 is modified to Phosphothreonine; by MAPK8. Residue S70 is modified to Phosphoserine; by MAPK8 and PKC. Over residues 75–85 (PAAPGAAAGPA) the composition is skewed to low complexity. Residue S87 is modified to Phosphoserine; by MAPK8. The tract at residues 92–107 (VVHLTLRQAGDDFSRR) is required for interaction with SEPTIN4 isoform ARTS. Required XIAP-mediated ubiquitination and apoptosis. The BH3 signature appears at 93–107 (VHLTLRQAGDDFSRR). A BH1 motif is present at residues 136 to 155 (ELFRDGVNWGRIVAFFEFGG). The BH2 motif lies at 187 to 202 (TWIQDNGGWDAFVELY). Residues 212 to 233 (FSWLSLKTLLSLALVGACITLG) form a helical membrane-spanning segment.

It belongs to the Bcl-2 family. As to quaternary structure, forms homodimers, and heterodimers with BAX, BAD, BAK and Bcl-X(L). Heterodimerization with BAX requires intact BH1 and BH2 motifs, and is necessary for anti-apoptotic activity. Part of a complex composed of SEPTIN4 isoform ARTS, XIAP and BCL2, within the complex interacts (via BH3 domain) with SEPTIN4 isoform ARTS and XIAP, SEPTIN4 isoform ARTS acts as a scaffold protein and stabilizes the complex. Component of the complex, at least composed of LRPPRC, BECN1 and BCL2; the interactions prevent BECN1 from forming an autophagy-inducing complex with PIK3C3. Interacts with EI24. Also interacts with APAF1, BBC3, BCL2L1, BNIPL, MRPL41 and TP53BP2. Binding to FKBP8 seems to target BCL2 to the mitochondria and probably interferes with the binding of BCL2 to its targets. Interacts with BAG1 in an ATP-dependent manner. Interacts with RAF1 (the 'Ser-338' and 'Ser-339' phosphorylated form). Interacts (via the BH4 domain) with EGLN3; the interaction prevents the formation of the BAX-BCL2 complex and inhibits the anti-apoptotic activity of BCL2. Interacts with G0S2; this interaction also prevents the formation of the anti-apoptotic BAX-BCL2 complex. Interacts with RTL10/BOP. Interacts with the SCF(FBXO10) complex. Interacts (via the loop between motifs BH4 and BH3) with NLRP1 (via LRR repeats), but not with NLRP2, NLRP3, NLRP4, PYCARD, nor MEFV. Interacts with GIMAP3/IAN4, GIMAP4/IAN1 and GIMAP5/IAN5. Interacts with BCAP31. Interacts with IRF3; the interaction is inhibited by Sendai virus infection. Interacts with BECN1; thereby inhibiting autophagy in non-starvation conditions. Interacts with AMBRA1; thereby inhibiting autophagy. (Microbial infection) Interacts with Toxoplasma gondii ROP17; the interaction probably promotes BCL2 phosphorylation and degradation. Phosphorylation/dephosphorylation on Ser-70 regulates anti-apoptotic activity. Growth factor-stimulated phosphorylation on Ser-70 by PKC is required for the anti-apoptosis activity and occurs during the G2/M phase of the cell cycle. In the absence of growth factors, BCL2 appears to be phosphorylated by other protein kinases such as ERKs and stress-activated kinases. Phosphorylated by MAPK8/JNK1 at Thr-69, Ser-70 and Ser-87, which stimulates starvation-induced autophagy. Dephosphorylated by protein phosphatase 2A (PP2A). Post-translationally, proteolytically cleaved by caspases during apoptosis. The cleaved protein, lacking the BH4 motif, has pro-apoptotic activity, causes the release of cytochrome c into the cytosol promoting further caspase activity. In terms of processing, monoubiquitinated by PRKN, leading to an increase in its stability. Ubiquitinated by SCF(FBXO10), leading to its degradation by the proteasome. Ubiquitinated by XIAP, leading to its degradation by the proteasome. In terms of tissue distribution, expressed in a variety of tissues.

It localises to the mitochondrion outer membrane. Its subcellular location is the nucleus membrane. The protein localises to the endoplasmic reticulum membrane. It is found in the cytoplasm. Its function is as follows. Suppresses apoptosis in a variety of cell systems including factor-dependent lymphohematopoietic and neural cells. Regulates cell death by controlling the mitochondrial membrane permeability. Appears to function in a feedback loop system with caspases. Inhibits caspase activity either by preventing the release of cytochrome c from the mitochondria and/or by binding to the apoptosis-activating factor (APAF-1). Also acts as an inhibitor of autophagy: interacts with BECN1 and AMBRA1 during non-starvation conditions and inhibits their autophagy function. May attenuate inflammation by impairing NLRP1-inflammasome activation, hence CASP1 activation and IL1B release. This chain is Apoptosis regulator Bcl-2 (BCL2), found in Homo sapiens (Human).